The sequence spans 368 residues: Endoglucanase (368 aa).

Positions 1–21 are cleaved as a signal peptide; sequence MNVLRSGIVTMLLLAAFSVQA. Glu55 (proton donor) is an active-site residue. Asp116 acts as the Nucleophile in catalysis.

The protein belongs to the glycosyl hydrolase 8 (cellulase D) family.

Its subcellular location is the secreted. It carries out the reaction Endohydrolysis of (1-&gt;4)-beta-D-glucosidic linkages in cellulose, lichenin and cereal beta-D-glucans.. It participates in glycan metabolism; bacterial cellulose biosynthesis. Functionally, hydrolyzes carboxymethylcellulose. In Escherichia coli (strain K12), this protein is Endoglucanase (bcsZ).